The following is a 1407-amino-acid chain: DNA-directed RNA polymerase subunit beta' (1407 aa).

Zn(2+) contacts are provided by Cys70, Cys72, Cys85, and Cys88. Positions 460, 462, and 464 each coordinate Mg(2+). Zn(2+) is bound by residues Cys814, Cys888, Cys895, and Cys898.

Belongs to the RNA polymerase beta' chain family. The RNAP catalytic core consists of 2 alpha, 1 beta, 1 beta' and 1 omega subunit. When a sigma factor is associated with the core the holoenzyme is formed, which can initiate transcription. Requires Mg(2+) as cofactor. Zn(2+) is required as a cofactor.

It carries out the reaction RNA(n) + a ribonucleoside 5'-triphosphate = RNA(n+1) + diphosphate. Functionally, DNA-dependent RNA polymerase catalyzes the transcription of DNA into RNA using the four ribonucleoside triphosphates as substrates. This is DNA-directed RNA polymerase subunit beta' from Cellvibrio japonicus (strain Ueda107) (Pseudomonas fluorescens subsp. cellulosa).